The following is a 409-amino-acid chain: Arginine deiminase (409 aa).

Catalysis depends on Cys-399, which acts as the Amidino-cysteine intermediate.

Belongs to the arginine deiminase family.

Its subcellular location is the cytoplasm. The enzyme catalyses L-arginine + H2O = L-citrulline + NH4(+). It functions in the pathway amino-acid degradation; L-arginine degradation via ADI pathway; carbamoyl phosphate from L-arginine: step 1/2. This chain is Arginine deiminase, found in Borreliella afzelii (strain PKo) (Borrelia afzelii).